The chain runs to 205 residues: Holliday junction branch migration complex subunit RuvA (205 aa).

Residues methionine 1–isoleucine 64 are domain I. The interval histidine 65–glutamate 143 is domain II. The segment at arginine 144–proline 156 is flexible linker. The tract at residues valine 157–leucine 205 is domain III.

The protein belongs to the RuvA family. As to quaternary structure, homotetramer. Forms an RuvA(8)-RuvB(12)-Holliday junction (HJ) complex. HJ DNA is sandwiched between 2 RuvA tetramers; dsDNA enters through RuvA and exits via RuvB. An RuvB hexamer assembles on each DNA strand where it exits the tetramer. Each RuvB hexamer is contacted by two RuvA subunits (via domain III) on 2 adjacent RuvB subunits; this complex drives branch migration. In the full resolvosome a probable DNA-RuvA(4)-RuvB(12)-RuvC(2) complex forms which resolves the HJ.

It is found in the cytoplasm. The RuvA-RuvB-RuvC complex processes Holliday junction (HJ) DNA during genetic recombination and DNA repair, while the RuvA-RuvB complex plays an important role in the rescue of blocked DNA replication forks via replication fork reversal (RFR). RuvA specifically binds to HJ cruciform DNA, conferring on it an open structure. The RuvB hexamer acts as an ATP-dependent pump, pulling dsDNA into and through the RuvAB complex. HJ branch migration allows RuvC to scan DNA until it finds its consensus sequence, where it cleaves and resolves the cruciform DNA. The sequence is that of Holliday junction branch migration complex subunit RuvA from Shewanella amazonensis (strain ATCC BAA-1098 / SB2B).